The chain runs to 259 residues: Small ribosomal subunit protein uS2 (259 aa).

Belongs to the universal ribosomal protein uS2 family.

The protein is Small ribosomal subunit protein uS2 of Fervidobacterium nodosum (strain ATCC 35602 / DSM 5306 / Rt17-B1).